We begin with the raw amino-acid sequence, 284 residues long: Probable tRNA-splicing endonuclease subunit sen34 (284 aa).

Active-site residues include Tyr206, His214, and Lys245.

Belongs to the tRNA-intron endonuclease family. In terms of assembly, heterotetramer composed of sen2, sen15, sen34 and sen54. Interacts directly with sen15.

It catalyses the reaction pretRNA = a 3'-half-tRNA molecule with a 5'-OH end + a 5'-half-tRNA molecule with a 2',3'-cyclic phosphate end + an intron with a 2',3'-cyclic phosphate and a 5'-hydroxyl terminus.. Functionally, constitutes one of the two catalytic subunit of the tRNA-splicing endonuclease complex, a complex responsible for identification and cleavage of the splice sites in pre-tRNA. It cleaves pre-tRNA at the 5'- and 3'-splice sites to release the intron. The products are an intron and two tRNA half-molecules bearing 2',3'-cyclic phosphate and 5'-OH termini. There are no conserved sequences at the splice sites, but the intron is invariably located at the same site in the gene, placing the splice sites an invariant distance from the constant structural features of the tRNA body. It probably carries the active site for 3'-splice site cleavage. This is Probable tRNA-splicing endonuclease subunit sen34 (sen34) from Schizosaccharomyces pombe (strain 972 / ATCC 24843) (Fission yeast).